Reading from the N-terminus, the 874-residue chain is MSIQSIVTKETLKKKDTNIEIQEKNMNDLVESASRVIAPLWPISTFAAHHPWMGLEKQSFEQVANWLKEARNVDIYPSASMIHSAKAKGEIEESFLQIGLSRWLDSQSFHIPRETAERFCQEALKLERLPSSLLSSPELNKLAEEISYINTGSMEDSSMQPISSLIENQKGDNLSDVLNYHIIKWCKLYLDDSGSSWTMPNREKGLYRAWHHLITFDPALSKNERKVLKDWPQDAQGALTKALSELGIPESNRQAYLEGHLLSLPGWAGMIRWRSQQSIKEQALVIEYLAVRISMELAIVKPYLPLKNQKAEKKVSIVPLIASWIYWGDISTREWLQMSATEQSELLAFAYRFDENTRKKLWLEAWEQTHAEQLKKKISSKQRATNDKKRVVAQLAFCIDVRSEPFRRHLEKLGPFETFGIAGFFGLPIATTELGSNNSHPSLPVILKPKHQIKELADENEYKSYEQRKKIDSSVSYTFKTMKKNVLTSMLLPEVSGPLLGLQMITRSFVPRRVGGFIRNLRKNMLQKPNTTFSLNHVHDTKCEIPIGFTKEEKVNYVRQALKMVGLTEKFAPLVVMCGHSSQSTNNPYAAALECGACGGAAGGFNARVFATLCNLPEVREALSAEGIKIPEDTIFAAAEHKTTVDELEWIYVPELSEAAQEAFDNIESVMPNVSQHANRERLTQLPNFKMKIKNPSKEAHRFAEDWSEIRPEWGLARNASFIIGQRELTQDCDLEGRAFLHNYDWKQDENGDILASIIAGPGTVAQWINLQYYASTVAPHYYGSGNKTTQTVTAGLGVMQGNASDLLSGLPWQSVMQSDSETYHSPLRLLIVIQAPTKYIERLLNNDFTFREKVQNGWVRLASVDSEGRWKNW.

Positions 398, 400, 580, and 595 each coordinate Zn(2+).

It belongs to the inorganic carbon transporter (TC 9.A.2) DabA family. As to quaternary structure, forms a complex with DabB. Zn(2+) serves as cofactor.

Its subcellular location is the cell membrane. Functionally, part of an energy-coupled inorganic carbon pump. This Bacillus cereus (strain Q1) protein is Probable inorganic carbon transporter subunit DabA.